The following is a 599-amino-acid chain: Leishmanolysin (599 aa).

A signal peptide spans 1 to 39 (MSVDSSSTHRHRSVAARLVRLAAAGAAVIAAVGTAAAWA). Residues 40–97 (HAGAVQHRCIHDAMQARVRQSVARHHTAPGAVSAVGLPYVTLDTAAAADRRPGSAPTV) constitute a propeptide, activation peptide. Intrachain disulfides connect Cys122–Cys139 and Cys188–Cys227. Residue His261 participates in Zn(2+) binding. Residue Glu262 is part of the active site. His265 contributes to the Zn(2+) binding site. N-linked (GlcNAc...) asparagine glycosylation occurs at Asn297. Intrachain disulfides connect Cys311–Cys383, Cys390–Cys452, Cys403–Cys422, Cys412–Cys486, Cys463–Cys507, Cys512–Cys562, and Cys532–Cys555. His331 contributes to the Zn(2+) binding site. The N-linked (GlcNAc...) asparagine glycan is linked to Asn394. Asn574 carries the GPI-anchor amidated asparagine lipid modification. The propeptide at 575 to 599 (AAAGRRGPRAAATALLVAALLAVAL) is removed in mature form.

This sequence belongs to the peptidase M8 family. Zn(2+) serves as cofactor.

It localises to the cell membrane. The enzyme catalyses Preference for hydrophobic residues at P1 and P1' and basic residues at P2' and P3'. A model nonapeptide is cleaved at -Ala-Tyr-|-Leu-Lys-Lys-.. Has an integral role during the infection of macrophages in the mammalian host. In Leishmania chagasi, this protein is Leishmanolysin (gp63).